Here is a 260-residue protein sequence, read N- to C-terminus: Purine nucleoside phosphorylase PD_1754 (260 aa).

His79, Cys120, and His137 together coordinate Zn(2+).

Belongs to the purine nucleoside phosphorylase YfiH/LACC1 family. As to quaternary structure, homodimer. Requires Cu(2+) as cofactor. It depends on Zn(2+) as a cofactor.

It catalyses the reaction adenosine + phosphate = alpha-D-ribose 1-phosphate + adenine. It carries out the reaction S-methyl-5'-thioadenosine + phosphate = 5-(methylsulfanyl)-alpha-D-ribose 1-phosphate + adenine. The enzyme catalyses inosine + phosphate = alpha-D-ribose 1-phosphate + hypoxanthine. The catalysed reaction is adenosine + H2O + H(+) = inosine + NH4(+). Functionally, purine nucleoside enzyme that catalyzes the phosphorolysis of adenosine and inosine nucleosides, yielding D-ribose 1-phosphate and the respective free bases, adenine and hypoxanthine. Also catalyzes the phosphorolysis of S-methyl-5'-thioadenosine into adenine and S-methyl-5-thio-alpha-D-ribose 1-phosphate. Also has adenosine deaminase activity. The chain is Purine nucleoside phosphorylase PD_1754 from Xylella fastidiosa (strain Temecula1 / ATCC 700964).